Consider the following 128-residue polypeptide: Large-conductance mechanosensitive channel (128 aa).

Helical transmembrane passes span 10–30 and 76–96; these read FAMR…GAFG and GLFI…FMMV.

It belongs to the MscL family. As to quaternary structure, homopentamer.

The protein resides in the cell inner membrane. Its function is as follows. Channel that opens in response to stretch forces in the membrane lipid bilayer. May participate in the regulation of osmotic pressure changes within the cell. The polypeptide is Large-conductance mechanosensitive channel (Mannheimia succiniciproducens (strain KCTC 0769BP / MBEL55E)).